Here is a 336-residue protein sequence, read N- to C-terminus: Tryptophan--tRNA ligase (336 aa).

ATP is bound by residues 16-18 (QPT) and 24-25 (GN). The short motif at 17–25 (PTGQLHLGN) is the 'HIGH' region element. Aspartate 140 serves as a coordination point for L-tryptophan. Residues 152–154 (GED), valine 191, and 200–204 (KMSKS) contribute to the ATP site. A 'KMSKS' region motif is present at residues 200–204 (KMSKS).

The protein belongs to the class-I aminoacyl-tRNA synthetase family. In terms of assembly, homodimer.

The protein resides in the cytoplasm. It carries out the reaction tRNA(Trp) + L-tryptophan + ATP = L-tryptophyl-tRNA(Trp) + AMP + diphosphate + H(+). Catalyzes the attachment of tryptophan to tRNA(Trp). The sequence is that of Tryptophan--tRNA ligase from Gloeobacter violaceus (strain ATCC 29082 / PCC 7421).